The sequence spans 508 residues: MDPAAPGLACSILRLGLGLLLLCSWWYPGSAEPRAPPEKIAVIGAGIGGTSAAYYLRQKFGKDVKIDVFEKGKVGGRLATLNVQGQEFESGGSVIHPLNLHMKRFVKDLGLSAVQSPSGLVGVYNGETLVYEESSWFIINMIKLIWHYGFQSLRMHMWVEDILDKFMRIYRYQSHDYAFSSVEKLLHSLGGDDYLGLFNRSLLETLQKAGFSEKFLDEIITPVMRVNYGQTTNINGFVGAVSMAGTDPGLWAVKGGNKLVCSRLLQASRSNLVSGLVMSIEEKTRTKQTGNPSKVYEVVYQTGSETHSDFYDIVLVATPLNRKMSNINFLNFDPPIEEFHQHYEPLVTTLIKGELNSTVFSSRALNEFHLGTVLTTDNPDLFINSIGLVSPVEEDNNPQPKADTAHVWKIFSAAALTKEQILKLFVSYDYAVKQSWLAYPHYTPPEKCPSIILHDQLYYLNGIEFAASAMEMSAIAGYNAALLAYHRWNGNTHMIDQEDLYERLKTEL.

The first 31 residues, 1–31 (MDPAAPGLACSILRLGLGLLLLCSWWYPGSA), serve as a signal peptide directing secretion. N-linked (GlcNAc...) asparagine glycosylation is found at asparagine 199, asparagine 291, and asparagine 356.

The protein belongs to the prenylcysteine oxidase family. The cofactor is FAD.

It localises to the lysosome. It carries out the reaction an S-polyprenyl-L-cysteine + O2 + H2O = a polyprenal + L-cysteine + H2O2. The catalysed reaction is S-(2E,6E)-farnesyl-L-cysteine + O2 + H2O = (2E,6E)-farnesal + L-cysteine + H2O2. The enzyme catalyses [(2E,6E,10E)-geranylgeranyl]-L-cysteine + O2 + H2O = (2E,6E,10E)-geranylgeranial + L-cysteine + H2O2. In terms of biological role, prenylcysteine oxidase that cleaves the thioether bond of prenyl-L-cysteines, such as farnesylcysteine and geranylgeranylcysteine. Only active against free prenylcysteines and not prenylcysteine residues within prenylated proteins or peptides. Involved in the final step in the degradation of prenylated proteins, by degrading prenylcysteines after the protein has been degraded. This Bos taurus (Bovine) protein is Prenylcysteine oxidase 1.